A 486-amino-acid polypeptide reads, in one-letter code: Protein nucleotidyltransferase YdiU (486 aa).

Positions 90, 92, 93, 113, 125, 126, 176, and 183 each coordinate ATP. Catalysis depends on aspartate 252, which acts as the Proton acceptor. 2 residues coordinate Mg(2+): asparagine 253 and aspartate 262. Aspartate 262 contacts ATP.

The protein belongs to the SELO family. Requires Mg(2+) as cofactor. Mn(2+) serves as cofactor.

The enzyme catalyses L-seryl-[protein] + ATP = 3-O-(5'-adenylyl)-L-seryl-[protein] + diphosphate. It catalyses the reaction L-threonyl-[protein] + ATP = 3-O-(5'-adenylyl)-L-threonyl-[protein] + diphosphate. The catalysed reaction is L-tyrosyl-[protein] + ATP = O-(5'-adenylyl)-L-tyrosyl-[protein] + diphosphate. It carries out the reaction L-histidyl-[protein] + UTP = N(tele)-(5'-uridylyl)-L-histidyl-[protein] + diphosphate. The enzyme catalyses L-seryl-[protein] + UTP = O-(5'-uridylyl)-L-seryl-[protein] + diphosphate. It catalyses the reaction L-tyrosyl-[protein] + UTP = O-(5'-uridylyl)-L-tyrosyl-[protein] + diphosphate. In terms of biological role, nucleotidyltransferase involved in the post-translational modification of proteins. It can catalyze the addition of adenosine monophosphate (AMP) or uridine monophosphate (UMP) to a protein, resulting in modifications known as AMPylation and UMPylation. This chain is Protein nucleotidyltransferase YdiU, found in Pseudomonas aeruginosa (strain ATCC 15692 / DSM 22644 / CIP 104116 / JCM 14847 / LMG 12228 / 1C / PRS 101 / PAO1).